The primary structure comprises 121 residues: Small ribosomal subunit protein bS16 (121 aa).

Positions 80–121 (AGVREKTERNNPNKAKPGKKAQERAEEKAAKAAEAAEAADAE) are disordered. 2 stretches are compositionally biased toward basic and acidic residues: residues 81–90 (GVREKTERNN) and 99–110 (KAQERAEEKAAK).

The protein belongs to the bacterial ribosomal protein bS16 family.

In Ruegeria sp. (strain TM1040) (Silicibacter sp.), this protein is Small ribosomal subunit protein bS16.